A 388-amino-acid chain; its full sequence is Succinate--CoA ligase [ADP-forming] subunit beta (388 aa).

Residues 9–244 (KEIFRSMGVA…LEEEDPKEIE (236 aa)) enclose the ATP-grasp domain. Residues lysine 46, 53 to 55 (GRG), glutamate 99, cysteine 102, and glutamate 107 contribute to the ATP site. Mg(2+) is bound by residues asparagine 199 and aspartate 213. Residues asparagine 264 and 321-323 (GIM) contribute to the substrate site.

It belongs to the succinate/malate CoA ligase beta subunit family. As to quaternary structure, heterotetramer of two alpha and two beta subunits. Mg(2+) serves as cofactor.

The enzyme catalyses succinate + ATP + CoA = succinyl-CoA + ADP + phosphate. The catalysed reaction is GTP + succinate + CoA = succinyl-CoA + GDP + phosphate. It participates in carbohydrate metabolism; tricarboxylic acid cycle; succinate from succinyl-CoA (ligase route): step 1/1. In terms of biological role, succinyl-CoA synthetase functions in the citric acid cycle (TCA), coupling the hydrolysis of succinyl-CoA to the synthesis of either ATP or GTP and thus represents the only step of substrate-level phosphorylation in the TCA. The beta subunit provides nucleotide specificity of the enzyme and binds the substrate succinate, while the binding sites for coenzyme A and phosphate are found in the alpha subunit. In Staphylococcus aureus (strain MRSA252), this protein is Succinate--CoA ligase [ADP-forming] subunit beta.